Consider the following 258-residue polypeptide: UPF0246 protein YaaA (258 aa).

The protein belongs to the UPF0246 family.

The polypeptide is UPF0246 protein YaaA (Escherichia coli (strain SE11)).